The sequence spans 701 residues: MARTTPISRYRNIGIVAHVDAGKTTTTERVLFYTGKSHKMGEVHDGAATTDWMVQEQERGITITSAAITAFWKGSEKQYPHEHRFNVIDTPGHVDFTIEVERSLRVLDGAVVVFCGTSGVEPQSETVWRQANKYGVPRLVYVNKMDRAGANFLRVIGQIKQRLGHTPVPIQLAIGSEDNFQGQIDLINMQAVYWNDSDKGMVPVRKEIPADMLELAEEWRNNMVEAAAEASEELMNKYLEGEELSIAEIKAALRQRTIAGEIVLAVCGSSFKNKGVPLVLDAVIDFLPAPTDIPAIKGSNPDNEEEEMERHASDDEPFAALAFKIATDPFVGTLTFVRVYSGVLNSGDGVINSVKGKKERVGRMVQMHANAREEIKEVRAGDIAALIGMKDVTTGETLCNADKPIILVRMDFPEPVISVAVEPKTKDDQEKMGIALGKLAQEDPSFRVKTDEETGQTIISGMGELHLDILVDRMRREFNVEANIGKPQVSYRERITKNCEIEGKFVRQSGGRGQFGHCWIRFAPADEGQEGLQFLNEVVGGVVPKEYIPAIQKGIEEQMKNGVVAGYPLIGLKATVFDGSYHDVDSNEMAFKVAASMATKQLAQKGGGELLEPIMAVEVVTPEDYMGDVMGDLNRRRGMIQGMEDTVSGKVIRAEVPLGEMFGYATDVRSMSQGRASYSMEFKKYDTAPSHIVESVTKKQG.

The tr-type G domain occupies 8–291 (SRYRNIGIVA…AVIDFLPAPT (284 aa)). Residues 17–24 (AHVDAGKT), 89–93 (DTPGH), and 143–146 (NKMD) contribute to the GTP site.

This sequence belongs to the TRAFAC class translation factor GTPase superfamily. Classic translation factor GTPase family. EF-G/EF-2 subfamily.

The protein localises to the cytoplasm. Catalyzes the GTP-dependent ribosomal translocation step during translation elongation. During this step, the ribosome changes from the pre-translocational (PRE) to the post-translocational (POST) state as the newly formed A-site-bound peptidyl-tRNA and P-site-bound deacylated tRNA move to the P and E sites, respectively. Catalyzes the coordinated movement of the two tRNA molecules, the mRNA and conformational changes in the ribosome. The protein is Elongation factor G of Pseudomonas fluorescens (strain Pf0-1).